Consider the following 763-residue polypeptide: Ethylene receptor 2 (763 aa).

3 helical membrane-spanning segments follow: residues Phe-58–Ser-78, Ile-86–Phe-106, and Val-115–Ile-135. Cu cation is bound by residues Cys-97 and His-101. The GAF domain occupies Asp-190–Leu-339. The 234-residue stretch at Ala-382 to Leu-615 folds into the Histidine kinase domain. A Response regulatory domain is found at Gln-641–Leu-760. Residue Asp-692 is modified to 4-aspartylphosphate.

The protein belongs to the ethylene receptor family. Requires Cu cation as cofactor. In terms of tissue distribution, expressed in anthers and hulls.

The protein localises to the endoplasmic reticulum membrane. It catalyses the reaction ATP + protein L-histidine = ADP + protein N-phospho-L-histidine.. Ethylene receptor related to bacterial two-component regulators. Acts as a negative regulator of ethylene signaling. May delay the transition from the vegetative stage to the floral stage by up-regulating GI (GIGANTEA) and RCN1 and cause starch accumulation in stems by down-regulating the alpha-amylase AMY3D. In Oryza sativa subsp. indica (Rice), this protein is Ethylene receptor 2.